The primary structure comprises 539 residues: GMP synthase [glutamine-hydrolyzing] (539 aa).

One can recognise a Glutamine amidotransferase type-1 domain in the interval 4–202; the sequence is KILILDFGSQ…VLDIAGAKPD (199 aa). Residue C81 is the Nucleophile of the active site. Active-site residues include H176 and E178. In terms of domain architecture, GMPS ATP-PPase spans 203–395; the sequence is WIMRDHIEEA…LGLPAEMVYR (193 aa). 230–236 lines the ATP pocket; sequence SGGVDSS.

Homodimer.

The catalysed reaction is XMP + L-glutamine + ATP + H2O = GMP + L-glutamate + AMP + diphosphate + 2 H(+). Its pathway is purine metabolism; GMP biosynthesis; GMP from XMP (L-Gln route): step 1/1. Catalyzes the synthesis of GMP from XMP. The protein is GMP synthase [glutamine-hydrolyzing] of Burkholderia pseudomallei (strain 1106a).